The primary structure comprises 177 residues: T-cell receptor beta chain C region (177 aa).

Residues 1–150 (EDLANVSAPQ…GVLSATVLYE (150 aa)) form a c region region. Residues asparagine 5 and asparagine 22 are each glycosylated (N-linked (GlcNAc...) asparagine). A disulfide bridge connects residues cysteine 31 and cysteine 96. A helical transmembrane segment spans residues 146–168 (TVLYEILLGKATLYAVLVSALVL). The Cytoplasmic segment spans residues 169-177 (MAMVKRKDS).

It localises to the membrane. The chain is T-cell receptor beta chain C region from Oryctolagus cuniculus (Rabbit).